Here is a 602-residue protein sequence, read N- to C-terminus: Aspartate--tRNA(Asp/Asn) ligase (602 aa).

Residue Glu-175 coordinates L-aspartate. The interval 199–202 (QIFK) is aspartate. Arg-221 lines the L-aspartate pocket. Residues 221–223 (RDE) and Gln-230 each bind ATP. Residue His-458 participates in L-aspartate binding. An ATP-binding site is contributed by Glu-492. Arg-499 provides a ligand contact to L-aspartate. 544 to 547 (GLDR) provides a ligand contact to ATP.

This sequence belongs to the class-II aminoacyl-tRNA synthetase family. Type 1 subfamily. As to quaternary structure, homodimer.

It localises to the cytoplasm. The catalysed reaction is tRNA(Asx) + L-aspartate + ATP = L-aspartyl-tRNA(Asx) + AMP + diphosphate. In terms of biological role, aspartyl-tRNA synthetase with relaxed tRNA specificity since it is able to aspartylate not only its cognate tRNA(Asp) but also tRNA(Asn). Reaction proceeds in two steps: L-aspartate is first activated by ATP to form Asp-AMP and then transferred to the acceptor end of tRNA(Asp/Asn). The sequence is that of Aspartate--tRNA(Asp/Asn) ligase from Cupriavidus necator (strain ATCC 17699 / DSM 428 / KCTC 22496 / NCIMB 10442 / H16 / Stanier 337) (Ralstonia eutropha).